The chain runs to 2098 residues: Unconventional myosin heavy chain 6 (2098 aa).

The 671-residue stretch at 62–732 (QGVEDMCQLG…HDLVLEQEYY (671 aa)) folds into the Myosin motor domain. 155 to 162 (GESGAGKT) lines the ATP pocket. Actin-binding stretches follow at residues 609 to 631 (LEQL…KPNE) and 711 to 725 (QLGK…KHDL). IQ domains are found at residues 735–757 (LKDK…DFEK), 758–787 (QRQA…GFSR), and 804–833 (LRKT…RGEK). The tract at residues 860–898 (FLPSDGKDSGNENDSADSSRRGSYSRLHTSPVMPPANIP) is disordered. Residues 929–1168 (HVKKPLKTAL…PSYVELQANK (240 aa)) form the MyTH4 1 domain. In terms of domain architecture, Ras-associating spans 1171-1211 (KPVVLAVTFMDGSVKTLCADSATTAAELCKQLAEKVGLTNS). Positions 1173–1481 (VVLAVTFMDG…MFLEGLKKRS (309 aa)) constitute an FERM 1 domain. One can recognise an SH3 domain in the interval 1479 to 1547 (KRSRYLVAIK…RAENVYVLPT (69 aa)). The region spanning 1624–1772 (FSREHIDQPL…PHLVEVEAIQ (149 aa)) is the MyTH4 2 domain. The region spanning 1778–2086 (IFHKVFFPDN…SYISLLISNQ (309 aa)) is the FERM 2 domain.

Belongs to the TRAFAC class myosin-kinesin ATPase superfamily. Myosin family. Interacts with unc-98.

The protein localises to the cytoplasm. Its function is as follows. Myosins are actin-based motor molecules with ATPase activity. Unconventional myosins serve in intracellular movements. Their highly divergent tails are presumed to bind to membranous compartments, which would be moved relative to actin filaments. The chain is Unconventional myosin heavy chain 6 from Caenorhabditis elegans.